The sequence spans 588 residues: Adenine deaminase (588 aa).

The protein belongs to the metallo-dependent hydrolases superfamily. Adenine deaminase family. Homodimer. Mn(2+) serves as cofactor.

It catalyses the reaction adenine + H2O + H(+) = hypoxanthine + NH4(+). The chain is Adenine deaminase from Shigella sonnei (strain Ss046).